The primary structure comprises 314 residues: Serine/threonine-protein phosphatase CPPED1 (314 aa).

Serine 2 bears the Phosphoserine mark. The catalytic stretch occupies residues 47-250; sequence KAWSTGDCDN…KVVFSGHYHR (204 aa). 4 residues coordinate a divalent metal cation: aspartate 53, aspartate 90, asparagine 127, and histidine 247. Phosphoserine is present on serine 294.

This sequence belongs to the metallophosphoesterase superfamily. CPPED1 family. A divalent metal cation is required as a cofactor.

The protein localises to the cytoplasm. It carries out the reaction O-phospho-L-seryl-[protein] + H2O = L-seryl-[protein] + phosphate. The catalysed reaction is O-phospho-L-threonyl-[protein] + H2O = L-threonyl-[protein] + phosphate. In terms of biological role, protein phosphatase that dephosphorylates AKT family kinase specifically at 'Ser-473', blocking cell cycle progression and promoting cell apoptosis. May play an inhibitory role in glucose uptake by adipocytes. The protein is Serine/threonine-protein phosphatase CPPED1 (CPPED1) of Pongo abelii (Sumatran orangutan).